Consider the following 259-residue polypeptide: Small ribosomal subunit protein eS1 (259 aa).

2 disordered regions span residues 1–23 and 235–259; these read MAVG…KTAD and ESKS…VDSV. Over residues 8 to 19 the composition is skewed to basic residues; the sequence is KVTKGGKKGGKK. The segment covering 246-259 has biased composition (basic and acidic residues); that stretch reads SRPDHYEPPKVDSV.

Belongs to the eukaryotic ribosomal protein eS1 family. As to quaternary structure, component of the small ribosomal subunit. Mature ribosomes consist of a small (40S) and a large (60S) subunit. The 40S subunit contains about 33 different proteins and 1 molecule of RNA (18S). The 60S subunit contains about 49 different proteins and 3 molecules of RNA (28S, 5.8S and 5S).

The protein resides in the cytoplasm. In Schistosoma japonicum (Blood fluke), this protein is Small ribosomal subunit protein eS1.